A 346-amino-acid chain; its full sequence is Cyclin-dependent kinase 20 (346 aa).

The 285-residue stretch at 4–288 (YCILGRIGEG…ASQALLHQYF (285 aa)) folds into the Protein kinase domain. Residues 10–18 (IGEGAHGIV) and lysine 33 contribute to the ATP site. The active-site Proton acceptor is aspartate 127. Positions 298-324 (SELPIPQRPGGPTPKAHPGPPHVHDFH) are disordered. Residues 303–318 (PQRPGGPTPKAHPGPP) show a composition bias toward pro residues.

It belongs to the protein kinase superfamily. CMGC Ser/Thr protein kinase family. CDC2/CDKX subfamily. In terms of assembly, monomer. Interacts with TBC1D32 and MAK.

The protein localises to the nucleus. Its subcellular location is the cytoplasm. It is found in the cell projection. The protein resides in the cilium. The enzyme catalyses L-seryl-[protein] + ATP = O-phospho-L-seryl-[protein] + ADP + H(+). It catalyses the reaction L-threonyl-[protein] + ATP = O-phospho-L-threonyl-[protein] + ADP + H(+). Its function is as follows. Required for high-level Shh responses in the developing neural tube. Together with TBC1D32, controls the structure of the primary cilium by coordinating assembly of the ciliary membrane and axoneme, allowing GLI2 to be properly activated in response to SHH signaling. Involved in cell growth. Activates CDK2, a kinase involved in the control of the cell cycle, by phosphorylating residue 'Thr-160'. The protein is Cyclin-dependent kinase 20 (Cdk20) of Rattus norvegicus (Rat).